A 204-amino-acid polypeptide reads, in one-letter code: Ribonuclease HII (204 aa).

In terms of domain architecture, RNase H type-2 spans 16–204; that stretch reads ESIAGCDEVG…RRSFLKKILK (189 aa). Asp22, Glu23, and Asp120 together coordinate a divalent metal cation.

It belongs to the RNase HII family. Requires Mn(2+) as cofactor. Mg(2+) serves as cofactor.

The protein localises to the cytoplasm. The enzyme catalyses Endonucleolytic cleavage to 5'-phosphomonoester.. Endonuclease that specifically degrades the RNA of RNA-DNA hybrids. The chain is Ribonuclease HII from Alkaliphilus metalliredigens (strain QYMF).